The sequence spans 423 residues: Probable sodium/metabolite cotransporter BASS3, chloroplastic (423 aa).

The N-terminal 45 residues, 1–45, are a transit peptide targeting the chloroplast; that stretch reads MAAAVAASSSSSSSSCAAVGVATASHPHRHRQARFVVSPPAPASP. 9 helical membrane passes run 106-126, 138-158, 165-187, 192-214, 231-251, 254-274, 287-307, 318-338, and 380-400; these read ALLP…PATF, LGGI…ALAF, TIGY…RAFG, FFAG…ASFL, ISSV…VVPV, IAMA…GLLL, PVMP…PLAI, FLLL…GYWI, and VPAA…ASYW.

The protein belongs to the bile acid:sodium symporter (BASS) (TC 2.A.28) family.

The protein resides in the membrane. It is found in the plastid. The protein localises to the chloroplast envelope. Its function is as follows. May function as sodium-coupled metabolite transporter across the chloroplast envelope. The polypeptide is Probable sodium/metabolite cotransporter BASS3, chloroplastic (BASS3) (Oryza sativa subsp. japonica (Rice)).